Here is a 75-residue protein sequence, read N- to C-terminus: Protein TM_1420 (75 aa).

Residues Cys-6, Cys-11, Cys-39, and Cys-43 each contribute to the [2Fe-2S] cluster site.

Requires [2Fe-2S] cluster as cofactor.

Functionally, might be part of a multi-protein complex, possibly involved in metal cluster assembly. The protein is Protein TM_1420 of Thermotoga maritima (strain ATCC 43589 / DSM 3109 / JCM 10099 / NBRC 100826 / MSB8).